The sequence spans 140 residues: FAD synthase (140 aa).

Residues 10–11 (TF), 15–18 (HPGH), and N93 each bind ATP.

This sequence belongs to the archaeal FAD synthase family. In terms of assembly, homodimer. A divalent metal cation serves as cofactor.

It carries out the reaction FMN + ATP + H(+) = FAD + diphosphate. The protein operates within cofactor biosynthesis; FAD biosynthesis; FAD from FMN: step 1/1. Functionally, catalyzes the transfer of the AMP portion of ATP to flavin mononucleotide (FMN) to produce flavin adenine dinucleotide (FAD) coenzyme. This is FAD synthase from Methanocella arvoryzae (strain DSM 22066 / NBRC 105507 / MRE50).